A 429-amino-acid polypeptide reads, in one-letter code: Zinc finger protein 275 (429 aa).

Positions 31–95 are disordered; sequence VSDPSPNTDP…DGKRGSPQNL (65 aa). The span at 34 to 51 shows a compositional bias: polar residues; that stretch reads PSPNTDPAKYSESTSATR. At Ser76 the chain carries Phosphoserine. Positions 79–89 are enriched in basic and acidic residues; the sequence is FRQHGDSDGKR. 2 consecutive C2H2-type zinc fingers follow at residues 101–123 and 129–151; these read FACK…QRVH and WECG…RKSH. The segment at 149 to 176 is disordered; that stretch reads KSHVAAEPQPGPSRALENAAEKREQMER. Positions 167–176 are enriched in basic and acidic residues; it reads AAEKREQMER. 9 consecutive C2H2-type zinc fingers follow at residues 181 to 203, 209 to 231, 237 to 259, 265 to 287, 293 to 315, 321 to 343, 349 to 371, 377 to 399, and 405 to 427; these read FECE…LRVH, FDCE…QKLH, FACK…QRMH, FDCD…QRIH, YGCP…RRIH, YACG…ARIH, YACG…RRIH, YECD…RRIH, and CECS…QPTH.

Belongs to the krueppel C2H2-type zinc-finger protein family.

The protein localises to the nucleus. In terms of biological role, may be involved in transcriptional regulation. This chain is Zinc finger protein 275 (ZNF275), found in Homo sapiens (Human).